The sequence spans 449 residues: Probable glycosyltransferase 5 (449 aa).

Basic and acidic residues predominate over residues 1 to 14 (MMEKHGGKVTSDRR). Positions 1–24 (MMEKHGGKVTSDRRAGRRQHGQRC) are disordered. The Cytoplasmic segment spans residues 1–28 (MMEKHGGKVTSDRRAGRRQHGQRCSASD). A helical; Signal-anchor for type II membrane protein membrane pass occupies residues 29-49 (AAPLVVVVILIVAALFLILGP). Residues 50–449 (TGSSSFTVPR…HPTFRAARPT (400 aa)) lie on the Lumenal side of the membrane. Residues 74-109 (APPPPPPPAQMQAGANASSEEDSGLPPPRQLTDPPY) form a disordered region. N-linked (GlcNAc...) asparagine glycans are attached at residues asparagine 89, asparagine 413, and asparagine 422.

It belongs to the glycosyltransferase 34 family.

The protein resides in the golgi apparatus membrane. Its function is as follows. Probable glycosyltransferase that may be involved in the biosynthesis of xyloglucan. The protein is Probable glycosyltransferase 5 of Oryza sativa subsp. japonica (Rice).